A 275-amino-acid chain; its full sequence is Small ribosomal subunit protein uS2 (275 aa).

The tract at residues 232–256 (ARATDGKPEPEPVPGQELGADEPLA) is disordered.

The protein belongs to the universal ribosomal protein uS2 family.

The protein is Small ribosomal subunit protein uS2 of Acidothermus cellulolyticus (strain ATCC 43068 / DSM 8971 / 11B).